The following is a 253-amino-acid chain: DNA repair protein RecO (253 aa).

Belongs to the RecO family.

Involved in DNA repair and RecF pathway recombination. The chain is DNA repair protein RecO from Streptococcus agalactiae serotype III (strain NEM316).